The sequence spans 33 residues: uncharacterized protein (33 aa).

The helical transmembrane segment at 11–31 (LALVIYMSVVLLLMVGVPLLF) threads the bilayer.

The protein resides in the membrane. This is an uncharacterized protein from Saccharomyces cerevisiae (strain ATCC 204508 / S288c) (Baker's yeast).